The following is a 133-amino-acid chain: Hexon-interlacing protein (133 aa).

Residues 97–127 (REEDALSVVLTRMEELSQQLQDLFAKVALLN) are a coiled coil.

It belongs to the adenoviridae hexon-interlacing protein family. Homotrimer. Interacts with hexon protein; this interaction tethers the hexons together. Self-interacts with adjacent proteins. Interacts with kinesin light chain KLC1; this interaction leads to capsid disruption at the nuclear pore complex during virus entry into host cell.

The protein resides in the virion. It is found in the host nucleus. Its function is as follows. Structural component of the virion that acts as a cement protein on the capsid exterior and forms triskelion structures consisting of three molecules that stabilize three hexon trimers at the center of each icosahedral facet and fixes the peripentonal hexons. Dispensable for assembly. During virus entry, recruits the anterograde motor kinesin-1 to the capsid docked at the nuclear pore complex thereby subjecting the docked capsid to a pulling force. The resulting tension leads to capsid disruption, dispersion of capsid fragments toward cell periphery and eventually viral DNA entry into the host nucleus. The polypeptide is Hexon-interlacing protein (Homo sapiens (Human)).